We begin with the raw amino-acid sequence, 71 residues long: Putative membrane protein insertion efficiency factor (71 aa).

Belongs to the UPF0161 family.

It localises to the cell membrane. In terms of biological role, could be involved in insertion of integral membrane proteins into the membrane. This is Putative membrane protein insertion efficiency factor from Desulforudis audaxviator (strain MP104C).